The following is a 213-amino-acid chain: Pyrrolidone-carboxylate peptidase (213 aa).

Catalysis depends on residues Glu78, Cys141, and His165.

This sequence belongs to the peptidase C15 family. As to quaternary structure, homotetramer.

It localises to the cytoplasm. The catalysed reaction is Release of an N-terminal pyroglutamyl group from a polypeptide, the second amino acid generally not being Pro.. Removes 5-oxoproline from various penultimate amino acid residues except L-proline. The sequence is that of Pyrrolidone-carboxylate peptidase from Enterococcus faecalis (strain ATCC 700802 / V583).